The sequence spans 141 residues: Nucleoside diphosphate kinase (141 aa).

Positions 11, 59, 87, 93, 104, and 114 each coordinate ATP. His117 serves as the catalytic Pros-phosphohistidine intermediate.

The protein belongs to the NDK family. As to quaternary structure, homotetramer. The cofactor is Mg(2+).

The protein localises to the cytoplasm. The catalysed reaction is a 2'-deoxyribonucleoside 5'-diphosphate + ATP = a 2'-deoxyribonucleoside 5'-triphosphate + ADP. The enzyme catalyses a ribonucleoside 5'-diphosphate + ATP = a ribonucleoside 5'-triphosphate + ADP. Major role in the synthesis of nucleoside triphosphates other than ATP. The ATP gamma phosphate is transferred to the NDP beta phosphate via a ping-pong mechanism, using a phosphorylated active-site intermediate. The polypeptide is Nucleoside diphosphate kinase (Vibrio campbellii (strain ATCC BAA-1116)).